Reading from the N-terminus, the 186-residue chain is Early nodulin-like protein 13 (186 aa).

The first 23 residues, 1-23 (MAQRTLVATFFLIFFLLTNLVCS), serve as a signal peptide directing secretion. Residues 24-128 (KEIIVGGKTS…GEKLHIVVMS (105 aa)) enclose the Phytocyanin domain. Cys-82 and Cys-116 are oxidised to a cystine. 2 N-linked (GlcNAc...) asparagine glycosylation sites follow: Asn-83 and Asn-90. The GPI-anchor amidated alanine moiety is linked to residue Ala-165. A propeptide spans 166 to 186 (SSLTRQVGVLGFVGLLAIVLL) (removed in mature form).

The protein belongs to the early nodulin-like (ENODL) family. In terms of tissue distribution, mostly expressed in seedlings, siliques and flowers, and, to a lower extent, in roots, stems and seeds, but barely in leaves.

It localises to the cell membrane. In terms of biological role, may act as a carbohydrate transporter. Required, together with ENODL11, ENODL12, ENODL13, ENODL14 and ENODL15, for male-female communication and pollen tube reception and burst at the synergid cell surface of the female gametophyte. In Arabidopsis thaliana (Mouse-ear cress), this protein is Early nodulin-like protein 13.